The primary structure comprises 158 residues: SsrA-binding protein (158 aa).

The tract at residues 134 to 158 (KLHDKRETEKERDWNRQKSRLLKTG) is disordered. The segment covering 137-149 (DKRETEKERDWNR) has biased composition (basic and acidic residues).

This sequence belongs to the SmpB family.

The protein resides in the cytoplasm. Required for rescue of stalled ribosomes mediated by trans-translation. Binds to transfer-messenger RNA (tmRNA), required for stable association of tmRNA with ribosomes. tmRNA and SmpB together mimic tRNA shape, replacing the anticodon stem-loop with SmpB. tmRNA is encoded by the ssrA gene; the 2 termini fold to resemble tRNA(Ala) and it encodes a 'tag peptide', a short internal open reading frame. During trans-translation Ala-aminoacylated tmRNA acts like a tRNA, entering the A-site of stalled ribosomes, displacing the stalled mRNA. The ribosome then switches to translate the ORF on the tmRNA; the nascent peptide is terminated with the 'tag peptide' encoded by the tmRNA and targeted for degradation. The ribosome is freed to recommence translation, which seems to be the essential function of trans-translation. The sequence is that of SsrA-binding protein from Allorhizobium ampelinum (strain ATCC BAA-846 / DSM 112012 / S4) (Agrobacterium vitis (strain S4)).